A 92-amino-acid chain; its full sequence is Small ribosomal subunit protein uS19 (92 aa).

Belongs to the universal ribosomal protein uS19 family.

In terms of biological role, protein S19 forms a complex with S13 that binds strongly to the 16S ribosomal RNA. The chain is Small ribosomal subunit protein uS19 from Sinorhizobium medicae (strain WSM419) (Ensifer medicae).